A 203-amino-acid chain; its full sequence is Histone deacetylase HDT4 (203 aa).

A required to repress transcription region spans residues 2–5 (EFWG). A disordered region spans residues 121 to 203 (AALPQNEINP…PFPCGPSCKK (83 aa)). Residues 129 to 157 (NPEEDDESDSDEMGLDEDDDSSDEEDVEA) show a composition bias toward acidic residues. The segment covering 180 to 193 (GGKKNKSSGGKKRC) has biased composition (basic residues).

It belongs to the histone deacetylase HD2 family. In terms of tissue distribution, confined to stems and flowers with young siliques.

It localises to the nucleus. It is found in the nucleolus. Functionally, probably mediates the deacetylation of lysine residues lysine residues on the N-terminal part of the core histones (H2A, H2B, H3 and H4). Histone deacetylation gives a tag for epigenetic repression and plays an important role in transcriptional regulation, cell cycle progression and developmental events. This chain is Histone deacetylase HDT4 (HDT4), found in Arabidopsis thaliana (Mouse-ear cress).